Reading from the N-terminus, the 742-residue chain is Alginate lyase (742 aa).

A signal peptide spans 1–26; the sequence is MRLQPLFVSLALAAPCALLPTASLSA. Substrate contacts are provided by residues R143, 153 to 156, Q204, H208, and 263 to 266; these read QVLN and YYQR. The Proton donor role is filled by Y264. The Proton acceptor role is filled by H418. Residues H420 and D438 each coordinate Zn(2+). R443 serves as a coordination point for substrate. H469 is a Zn(2+) binding site. Substrate is bound at residue E669.

It belongs to the polysaccharide lyase 17 family. As to quaternary structure, homodimer. It depends on Zn(2+) as a cofactor.

The protein localises to the periplasm. The enzyme catalyses Cleavage of 4-deoxy-alpha-L-erythro-hex-4-enopyranuronoside oligosaccharides into 4-deoxy-alpha-L-erythro-hex-4-enopyranuronate monosaccharides.. Its function is as follows. Polysaccharide lyase that catalyzes the depolymerization of alginate via a beta-elimination mechanism, cleaving the beta-1,4 glycosidic bond between two adjacent sugar residues. Acts specifically on alginate and each of its block structures, with highest activity toward poly-beta-D-mannuronate (poly-ManA). Shows an exolytic mode of action, producing unsaturated monomers. Displays a very low activity against poly-beta-D-glucuronate (poly-GlcA), and is not active on poly-alpha-D-galacturonate, hyaluronan, heparin, heparan sulfate and chondroitin sulfate. In Stenotrophomonas maltophilia (strain K279a), this protein is Alginate lyase.